The primary structure comprises 59 residues: Small, acid-soluble spore protein H 2 (59 aa).

The protein belongs to the SspH family.

It is found in the spore core. The protein is Small, acid-soluble spore protein H 2 (sspH2) of Bacillus anthracis.